A 187-amino-acid polypeptide reads, in one-letter code: Threonylcarbamoyl-AMP synthase (187 aa).

Positions 3–187 (EVLPADVAEL…AKSGQVIRKG (185 aa)) constitute a YrdC-like domain.

This sequence belongs to the SUA5 family. TsaC subfamily.

The protein localises to the cytoplasm. The catalysed reaction is L-threonine + hydrogencarbonate + ATP = L-threonylcarbamoyladenylate + diphosphate + H2O. Functionally, required for the formation of a threonylcarbamoyl group on adenosine at position 37 (t(6)A37) in tRNAs that read codons beginning with adenine. Catalyzes the conversion of L-threonine, HCO(3)(-)/CO(2) and ATP to give threonylcarbamoyl-AMP (TC-AMP) as the acyladenylate intermediate, with the release of diphosphate. This chain is Threonylcarbamoyl-AMP synthase, found in Shewanella halifaxensis (strain HAW-EB4).